Here is a 1468-residue protein sequence, read N- to C-terminus: DNA polymerase III PolC-type (1468 aa).

Positions 197-217 (QKSLEDSAPPSEEVTPTQNYD) are disordered. Positions 430–586 (YVVFDVETTG…YDAEATGRLL (157 aa)) constitute an Exonuclease domain.

It belongs to the DNA polymerase type-C family. PolC subfamily.

It localises to the cytoplasm. The enzyme catalyses DNA(n) + a 2'-deoxyribonucleoside 5'-triphosphate = DNA(n+1) + diphosphate. Functionally, required for replicative DNA synthesis. This DNA polymerase also exhibits 3' to 5' exonuclease activity. In Streptococcus agalactiae serotype III (strain NEM316), this protein is DNA polymerase III PolC-type.